An 861-amino-acid chain; its full sequence is MGSKSFGNLLDLASGDLLDIPQTPRYLPRVMTVPGIISDVDGYGISDGDSDVISLPCRERKIIVANFLPLNGKKDSETGKWKFSLDNDSPLLHLKDGFSPETEVIYVGSLKTHVDVSEQDEVSHNLFEEFNCVATFLPQDVHKKFYLGFCKQQLWPLFHYMLPMCPDHGERFDRGLWQAYVSANKIFADKVMGVINLEEDYIWIHDYHLMVLPTFLRRRFHRVKLGFFLHSPFPSSEIYRTLPVREELLRGLLNCDLIGFHTFDYARHFLSCCCRMLGLEYESKRGHIALDYLGRTVFLKILPIGIHMGRLESVLNLPATAEKLKEIQEKYRGKKIILGVDDMDIFKGLSLKILAFEHLLQQYPSMLGKIVLIQIVNPARGSGKDVQEARKETYDTVKRINERYGSHDYEPVVLIDRPVPRFEKSAYYALAECCIVNAVRDGMNLVPYKYTVCRQGTPSMNKSLGVSDDLPRTSTLVLSEFIGCSPSLSGAIRVNPWDVDAVADSLYSAITMSDFEKQLRHKKHFHYISTHDVGYWARSFSQDLERASRDHYSKRCWGVGWGLGFRLVALSPNFRRLSIEQTVSAYRRSSKRAIFLDYDGTLVPETSIVKDPSAEVISALKALCSDPNNTIFIVSGRGKVSLSEWLAPCENLGIAAEHGYFTRWNKSSDWETSGLSDDLEWKKVVEPIMRLYTETTDGSNIEAKESALVWHHQDADPDFGSCQAKELLDHLETVLVNEPVIVNRGHQIVEVKPQGVSKGLVTGKILSRMLEDGIAPDFVVCIGDDRSDEEMFENISTTLSAQSSSMSTEIFACTVGRKPSKAKYFLDEVSDVVKLLQGLANTSSPKPRYPSHLRVSFESVV.

Phosphoserine is present on serine 5. Threonine 32 carries the phosphothreonine modification. A glycosyltransferase region spans residues 59–546 (ERKIIVANFL…ARSFSQDLER (488 aa)).

This sequence in the N-terminal section; belongs to the glycosyltransferase 20 family. In the C-terminal section; belongs to the trehalose phosphatase family.

It carries out the reaction D-glucose 6-phosphate + UDP-alpha-D-glucose = alpha,alpha-trehalose 6-phosphate + UDP + H(+). The protein is Probable alpha,alpha-trehalose-phosphate synthase [UDP-forming] 10 (TPS10) of Arabidopsis thaliana (Mouse-ear cress).